The chain runs to 166 residues: Interferon gamma (166 aa).

A signal peptide spans 1-23; the sequence is MKYTSSFLALLLSVLLGFSGSYG. Gln-24 is modified (pyrrolidone carboxylic acid). N-linked (GlcNAc...) asparagine glycosylation is found at Asn-39 and Asn-106.

Belongs to the type II (or gamma) interferon family. As to quaternary structure, homodimer. Interacts with IFNGR1 (via extracellular domain); this interaction promotes IFNGR1 dimerization. In terms of tissue distribution, released primarily from activated T lymphocytes.

It is found in the secreted. Functionally, type II interferon produced by immune cells such as T-cells and NK cells that plays crucial roles in antimicrobial, antiviral, and antitumor responses by activating effector immune cells and enhancing antigen presentation. Primarily signals through the JAK-STAT pathway after interaction with its receptor IFNGR1 to affect gene regulation. Upon IFNG binding, IFNGR1 intracellular domain opens out to allow association of downstream signaling components JAK2, JAK1 and STAT1, leading to STAT1 activation, nuclear translocation and transcription of IFNG-regulated genes. Many of the induced genes are transcription factors such as IRF1 that are able to further drive regulation of a next wave of transcription. Plays a role in class I antigen presentation pathway by inducing a replacement of catalytic proteasome subunits with immunoproteasome subunits. In turn, increases the quantity, quality, and repertoire of peptides for class I MHC loading. Increases the efficiency of peptide generation also by inducing the expression of activator PA28 that associates with the proteasome and alters its proteolytic cleavage preference. Up-regulates as well MHC II complexes on the cell surface by promoting expression of several key molecules such as cathepsins B/CTSB, H/CTSH, and L/CTSL. Participates in the regulation of hematopoietic stem cells during development and under homeostatic conditions by affecting their development, quiescence, and differentiation. In Capra hircus (Goat), this protein is Interferon gamma (IFNG).